The primary structure comprises 98 residues: Co-chaperonin GroES (98 aa).

It belongs to the GroES chaperonin family. In terms of assembly, heptamer of 7 subunits arranged in a ring. Interacts with the chaperonin GroEL.

Its subcellular location is the cytoplasm. In terms of biological role, together with the chaperonin GroEL, plays an essential role in assisting protein folding. The GroEL-GroES system forms a nano-cage that allows encapsulation of the non-native substrate proteins and provides a physical environment optimized to promote and accelerate protein folding. GroES binds to the apical surface of the GroEL ring, thereby capping the opening of the GroEL channel. This is Co-chaperonin GroES from Brucella abortus (strain S19).